Reading from the N-terminus, the 133-residue chain is Secreted effector protein SteB (133 aa).

It localises to the secreted. It is found in the host cytoplasm. Its function is as follows. Effector proteins function to alter host cell physiology and promote bacterial survival in host tissues. The protein is Secreted effector protein SteB (steB) of Salmonella typhimurium (strain 14028s / SGSC 2262).